The following is a 322-amino-acid chain: tRNA U34 carboxymethyltransferase (322 aa).

Residues Lys92, Trp106, Lys111, Gly131, 153 to 155, 181 to 182, Met196, Tyr200, and Arg315 each bind carboxy-S-adenosyl-L-methionine; these read DPS and VE.

This sequence belongs to the class I-like SAM-binding methyltransferase superfamily. CmoB family. In terms of assembly, homotetramer.

The catalysed reaction is carboxy-S-adenosyl-L-methionine + 5-hydroxyuridine(34) in tRNA = 5-carboxymethoxyuridine(34) in tRNA + S-adenosyl-L-homocysteine + H(+). Its function is as follows. Catalyzes carboxymethyl transfer from carboxy-S-adenosyl-L-methionine (Cx-SAM) to 5-hydroxyuridine (ho5U) to form 5-carboxymethoxyuridine (cmo5U) at position 34 in tRNAs. The polypeptide is tRNA U34 carboxymethyltransferase (Pseudoalteromonas translucida (strain TAC 125)).